Consider the following 527-residue polypeptide: MASTSNTFPPSQSNSSNNLPTSRHASIVEMLSTPPLLPHVQVNDTDDKEQPEESTPPTATAAAPGPGCAATPAPLRDEKPQFKLSAVPMTQTPSQCLSCVHAQKWQHIPLSQLIEQNKLIFVPGSISVEEAFNTLIKYHLNSIPVESFPGDMNCFTFDYNDLNSYLLLVLNKITVSNKQLTADCQNGKPVPVGEMVKLTPKNPFYKLPENESLSTVMGILGSGVHRVAITNEEMTKVKGILSQRRLIKYLWDNARSFTSLEPLLNSSLQDLHIGVLNIQSKPTSRQSRVISIQGEEPLIMGLYKMHVERISSIAVIDKQGNLLGNISVTDVKHVTRTSQYPLLHKTCRHFISVILNSRGLETGKDSFPIFHVYPSSSLARTLAKLVATKSHRLWIVQPPESSTSASSTNLTAANTAANAVSATAQSSANGATPMSKSSSSTSLNSHSPLMTAMEDPPSPRSSAIAIPPPSPASSTNTPNLFEKEYRTGKLIGVVSLTDIINLLARKQTGNKEVDPQSARRQRGSIAM.

2 stretches are compositionally biased toward low complexity: residues 1-22 (MASTSNTFPPSQSNSSNNLPTS) and 55-74 (TPPTATAAAPGPGCAATPAP). Positions 1–75 (MASTSNTFPP…PGCAATPAPL (75 aa)) are disordered. The residue at position 94 (serine 94) is a Phosphoserine. 4 CBS domains span residues 114 to 175 (IEQN…KITV), 198 to 256 (LTPK…NARS), 283 to 342 (TSRQ…QYPL), and 443 to 512 (LNSH…GNKE). The segment covering 424–447 (AQSSANGATPMSKSSSSTSLNSHS) has biased composition (low complexity). 2 disordered regions span residues 424–478 (AQSS…TNTP) and 508–527 (TGNKEVDPQSARRQRGSIAM). 2 positions are modified to phosphoserine: serine 458 and serine 524.

The protein belongs to the SDS23 family.

It localises to the cytoplasm. The protein localises to the nucleus. Its function is as follows. Involved in DNA replication and cell separation during budding. The sequence is that of Protein SDS24 (SDS24) from Saccharomyces cerevisiae (strain YJM789) (Baker's yeast).